Consider the following 479-residue polypeptide: Anaerobic nitric oxide reductase flavorubredoxin (479 aa).

The zinc metallo-hydrolase stretch occupies residues 30–210 (LRGSSYNSYL…PFSRLVTPKI (181 aa)). Fe cation-binding residues include His-79, Glu-81, Asp-83, His-147, Asp-166, and His-227. One can recognise a Flavodoxin-like domain in the interval 254–393 (ITIFYDTMSN…LCREHGREIA (140 aa)). FMN-binding positions include 260-264 (TMSNN) and 342-369 (AFGS…EMSL). A Rubredoxin-like domain is found at 423-474 (GPRMQCSVCQWIYDPAKGEPMQDVAPGTPWSEVPDNFLCPECSLGKDVFEEL). Fe cation contacts are provided by Cys-428, Cys-431, Cys-461, and Cys-464.

It in the N-terminal section; belongs to the zinc metallo-hydrolase group 3 family. In terms of assembly, homotetramer. Fe cation serves as cofactor. FMN is required as a cofactor.

It localises to the cytoplasm. It functions in the pathway nitrogen metabolism; nitric oxide reduction. In terms of biological role, anaerobic nitric oxide reductase; uses NADH to detoxify nitric oxide (NO), protecting several 4Fe-4S NO-sensitive enzymes. Has at least 2 reductase partners, only one of which (NorW, flavorubredoxin reductase) has been identified. NO probably binds to the di-iron center; electrons enter from the NorW at rubredoxin and are transferred sequentially to the FMN center and the di-iron center. Also able to function as an aerobic oxygen reductase. The protein is Anaerobic nitric oxide reductase flavorubredoxin of Shigella dysenteriae serotype 1 (strain Sd197).